A 344-amino-acid chain; its full sequence is MNHAITMGIFWHLIGAASAACFYAPFKKVKHWSWETMWSVGGIVSWLILPWAISATLLPDFWAYYRSFSASTLLPVFLFGAMWGIGNINYGLTMRYLGMSMGIGIAIGITLIVGTLMTPIINGQFAVLMHTQGGQMTLLGVLVAVIGVGIVTRAGQLKERKMGIKAEEFNLKKGLLLAVMCGIFSAGMSFAMNAAKPMHDAAAALGVDPLYAALPSYVVIMGGGALVNLGFCFIRLAKVKNLSVKADFSLAKPLIISNLLLSALGGLMWYLQFFFYAWGHASIPAQYDYMSWMLHMSFYVLCGGVVGLVLKEWNNAGRRPVSVLSLGCVVIIIAANIVGLGMAS.

A run of 10 helical transmembrane segments spans residues 4–24, 38–58, 68–88, 101–121, 131–151, 175–195, 214–234, 259–279, 290–310, and 323–343; these read AITMGIFWHLIGAASAACFYA, WSVGGIVSWLILPWAISATLL, FSASTLLPVFLFGAMWGIGNI, MGIGIAIGITLIVGTLMTPII, TQGGQMTLLGVLVAVIGVGIV, LLLAVMCGIFSAGMSFAMNAA, LPSYVVIMGGGALVNLGFCFI, LLLSALGGLMWYLQFFFYAWG, MSWMLHMSFYVLCGGVVGLVL, and VLSLGCVVIIIAANIVGLGMA.

The protein belongs to the L-rhamnose transporter (TC 2.A.7.6) family.

It is found in the cell inner membrane. It carries out the reaction L-rhamnopyranose(in) + H(+)(in) = L-rhamnopyranose(out) + H(+)(out). In terms of biological role, uptake of L-rhamnose across the cytoplasmic membrane with the concomitant transport of protons into the cell (symport system). The polypeptide is L-rhamnose-proton symporter (Klebsiella pneumoniae subsp. pneumoniae (strain ATCC 700721 / MGH 78578)).